A 207-amino-acid polypeptide reads, in one-letter code: MGTVKITSRYGILLGFIALLCTIISAGIYFLTKDKIDAVIAAQQRELLLQVIPQDYFNNNLLESAVIPQDKNFVGIQKIYFAKKDGNISAYAYETTAPDGYSGDIRLLVGLDPKGEVLGVRVIEHHETPGLGDKIERRISNWILGFTNQSINEHNLSEWAVKKDGGKFDQFSGATITPRAVVNQTKRSALIMLNNQALLQQLSTQVK.

Residues 11-31 (GILLGFIALLCTIISAGIYFL) traverse the membrane as a helical segment. Thr175 bears the FMN phosphoryl threonine mark.

The protein belongs to the RnfG family. The complex is composed of six subunits: RnfA, RnfB, RnfC, RnfD, RnfE and RnfG. Requires FMN as cofactor.

The protein localises to the cell inner membrane. Part of a membrane-bound complex that couples electron transfer with translocation of ions across the membrane. In Haemophilus influenzae (strain PittEE), this protein is Ion-translocating oxidoreductase complex subunit G.